The primary structure comprises 115 residues: Large ribosomal subunit protein bL19 (115 aa).

The protein belongs to the bacterial ribosomal protein bL19 family.

Its function is as follows. This protein is located at the 30S-50S ribosomal subunit interface and may play a role in the structure and function of the aminoacyl-tRNA binding site. The sequence is that of Large ribosomal subunit protein bL19 from Lacticaseibacillus casei (strain BL23) (Lactobacillus casei).